We begin with the raw amino-acid sequence, 4115 residues long: Transcription-associated protein 1 (4115 aa).

Over residues 1-11 the composition is skewed to polar residues; that stretch reads MDPSIPSTSHR. Disordered regions lie at residues 1–21 and 543–563; these read MDPS…GVQP and ESEQ…KKTS. The span at 544–563 shows a compositional bias: basic and acidic residues; the sequence is SEQKRNELPTPTKEHTKKTS. TPR repeat units lie at residues 1341 to 1374 and 1820 to 1853; these read LDGL…LLDL and QDYD…EVIP. Positions 2678-2701 are disordered; the sequence is LEEPEPMEVDQPKNAPAEEPKDNK. The FAT domain maps to 2808–3421; that stretch reads LIEFISSKHE…SNGASKVSKS (614 aa). The TPR 3 repeat unit spans residues 2855–2888; it reads IETLESLGALYKELAEFDQYSAIWERRSVFPETM. The PI3K/PI4K catalytic domain occupies 3740–4100; that stretch reads EPYFEIVMRG…CNSLIIRAKD (361 aa). A G-loop region spans residues 3746 to 3752; it reads VMRGGQV. The segment at 3959-3967 is catalytic loop; that stretch reads NLSPMTPHQ. The tract at residues 3979–4006 is activation loop; sequence NPFYRFELGTGQLMDIEHFAHEVPFRLT. In terms of domain architecture, FATC spans 4083 to 4115; that stretch reads DAKVKKDDCNSLIIRAKDSDNLSRMPPTYHAWF.

It belongs to the PI3/PI4-kinase family. TRA1 subfamily.

It localises to the nucleus. Its function is as follows. Influences germ cell fate in hermaphrodites. Acts downstream of tra-2 and tra-3 and through the Tip60 histone acetyltransferase complex to regulate germ cell fate decisions. Required for spermatogenesis and embryonic development. Acts with tra-2 to promote expression of fog-3 and control male tail development. Involved in the negative regulation of vulval development. This Caenorhabditis briggsae protein is Transcription-associated protein 1.